Reading from the N-terminus, the 340-residue chain is tRNA N6-adenosine threonylcarbamoyltransferase (340 aa).

The Fe cation site is built by histidine 111 and histidine 115. Residues 134–138 (LVSGG), aspartate 167, glycine 180, and asparagine 276 contribute to the substrate site. Position 304 (aspartate 304) interacts with Fe cation.

This sequence belongs to the KAE1 / TsaD family. Requires Fe(2+) as cofactor.

It localises to the cytoplasm. It carries out the reaction L-threonylcarbamoyladenylate + adenosine(37) in tRNA = N(6)-L-threonylcarbamoyladenosine(37) in tRNA + AMP + H(+). Required for the formation of a threonylcarbamoyl group on adenosine at position 37 (t(6)A37) in tRNAs that read codons beginning with adenine. Is involved in the transfer of the threonylcarbamoyl moiety of threonylcarbamoyl-AMP (TC-AMP) to the N6 group of A37, together with TsaE and TsaB. TsaD likely plays a direct catalytic role in this reaction. This Helicobacter pylori (strain G27) protein is tRNA N6-adenosine threonylcarbamoyltransferase.